The primary structure comprises 329 residues: Probable fructokinase-2 (329 aa).

This sequence belongs to the carbohydrate kinase PfkB family.

The enzyme catalyses D-fructose + ATP = D-fructose 6-phosphate + ADP + H(+). It functions in the pathway glycan biosynthesis; starch biosynthesis. Its function is as follows. May play an important role in maintaining the flux of carbon towards starch formation. The sequence is that of Probable fructokinase-2 from Arabidopsis thaliana (Mouse-ear cress).